A 597-amino-acid chain; its full sequence is Elongation factor 4 (597 aa).

Positions 2–184 (KNIRNFSIIA…EIVHKIPAPE (183 aa)) constitute a tr-type G domain. GTP-binding positions include 14–19 (DHGKST) and 131–134 (NKID).

Belongs to the TRAFAC class translation factor GTPase superfamily. Classic translation factor GTPase family. LepA subfamily.

The protein localises to the cell inner membrane. It carries out the reaction GTP + H2O = GDP + phosphate + H(+). In terms of biological role, required for accurate and efficient protein synthesis under certain stress conditions. May act as a fidelity factor of the translation reaction, by catalyzing a one-codon backward translocation of tRNAs on improperly translocated ribosomes. Back-translocation proceeds from a post-translocation (POST) complex to a pre-translocation (PRE) complex, thus giving elongation factor G a second chance to translocate the tRNAs correctly. Binds to ribosomes in a GTP-dependent manner. This chain is Elongation factor 4, found in Actinobacillus succinogenes (strain ATCC 55618 / DSM 22257 / CCUG 43843 / 130Z).